The chain runs to 436 residues: Bifunctional protein GlmU (436 aa).

The tract at residues 1–226 (MNEISIIILA…ETNFMGINDK (226 aa)) is pyrophosphorylase. Residues 9–12 (LAAG), Lys-23, Gln-75, and 82–83 (GT) each bind UDP-N-acetyl-alpha-D-glucosamine. Asp-105 is a binding site for Mg(2+). Residues Gly-138, Glu-152, Asn-167, and Asn-224 each contribute to the UDP-N-acetyl-alpha-D-glucosamine site. Mg(2+) is bound at residue Asn-224. The tract at residues 227–247 (FALSIAEEIMQNRIKENLMKN) is linker. Residues 248-436 (GVIMSLPDTI…YKFFGKNDEK (189 aa)) form an N-acetyltransferase region. UDP-N-acetyl-alpha-D-glucosamine is bound by residues Arg-311 and Lys-328. The active-site Proton acceptor is His-339. UDP-N-acetyl-alpha-D-glucosamine is bound by residues Tyr-342 and Asn-353. Acetyl-CoA-binding positions include 362–363 (NY), Ser-381, Ala-399, and Arg-416.

In the N-terminal section; belongs to the N-acetylglucosamine-1-phosphate uridyltransferase family. This sequence in the C-terminal section; belongs to the transferase hexapeptide repeat family. In terms of assembly, homotrimer. Mg(2+) is required as a cofactor.

It localises to the cytoplasm. It catalyses the reaction alpha-D-glucosamine 1-phosphate + acetyl-CoA = N-acetyl-alpha-D-glucosamine 1-phosphate + CoA + H(+). The catalysed reaction is N-acetyl-alpha-D-glucosamine 1-phosphate + UTP + H(+) = UDP-N-acetyl-alpha-D-glucosamine + diphosphate. It functions in the pathway nucleotide-sugar biosynthesis; UDP-N-acetyl-alpha-D-glucosamine biosynthesis; N-acetyl-alpha-D-glucosamine 1-phosphate from alpha-D-glucosamine 6-phosphate (route II): step 2/2. The protein operates within nucleotide-sugar biosynthesis; UDP-N-acetyl-alpha-D-glucosamine biosynthesis; UDP-N-acetyl-alpha-D-glucosamine from N-acetyl-alpha-D-glucosamine 1-phosphate: step 1/1. It participates in bacterial outer membrane biogenesis; LPS lipid A biosynthesis. Functionally, catalyzes the last two sequential reactions in the de novo biosynthetic pathway for UDP-N-acetylglucosamine (UDP-GlcNAc). The C-terminal domain catalyzes the transfer of acetyl group from acetyl coenzyme A to glucosamine-1-phosphate (GlcN-1-P) to produce N-acetylglucosamine-1-phosphate (GlcNAc-1-P), which is converted into UDP-GlcNAc by the transfer of uridine 5-monophosphate (from uridine 5-triphosphate), a reaction catalyzed by the N-terminal domain. The protein is Bifunctional protein GlmU of Campylobacter fetus subsp. fetus (strain 82-40).